Reading from the N-terminus, the 117-residue chain is Large ribosomal subunit protein bL19 (117 aa).

The protein belongs to the bacterial ribosomal protein bL19 family.

Its function is as follows. This protein is located at the 30S-50S ribosomal subunit interface and may play a role in the structure and function of the aminoacyl-tRNA binding site. This is Large ribosomal subunit protein bL19 from Shewanella amazonensis (strain ATCC BAA-1098 / SB2B).